A 278-amino-acid polypeptide reads, in one-letter code: Urease accessory protein UreD 3 (278 aa).

Belongs to the UreD family. In terms of assembly, ureD, UreF and UreG form a complex that acts as a GTP-hydrolysis-dependent molecular chaperone, activating the urease apoprotein by helping to assemble the nickel containing metallocenter of UreC. The UreE protein probably delivers the nickel.

It localises to the cytoplasm. Required for maturation of urease via the functional incorporation of the urease nickel metallocenter. This Bradyrhizobium sp. (strain BTAi1 / ATCC BAA-1182) protein is Urease accessory protein UreD 3.